The sequence spans 448 residues: MSRMFGTDGVRGIANEELTAEVAYNLGKAGAYVLTEGTHKPKIVVGMDTRISGHMLESALVAGILSMGGEAICLGIVPTPAVAHLTRKYGADAGVVISASHNPVEYNGIKFFDKGGYKLPDELEDRIQSVIENNFEGVPCPTGEDIGEKTIIDDAIKDYIEFAKGTIKGDLKGLRVALDCANGASYKASVETFKDLGAEVYVINNEPNGKNINKDCGSTHMESLRKYVVEKGCDFGLAFDGDADRCLAVDEKGNIVNGDFMMAICAKYMKDHKKLDKNTMVVTVMSNIGLFIAMEREKIDLIKTKVGDRYVLEEMLKEGYKIGGEQSGHIIFLDYNTTGDGLVTALQLSSIIKDSNKKLSELASIMKELPQVLLNAKVTNNMKNIYIEDEEIAGEIKKIEEQMEGKGRVLIRPSGTEPLVRVMLEGENQEEIDKIAHDLVKLIEKKTK.

The Phosphoserine intermediate role is filled by Ser-100. Residues Ser-100, Asp-240, Asp-242, and Asp-244 each coordinate Mg(2+). Ser-100 bears the Phosphoserine mark.

Belongs to the phosphohexose mutase family. Mg(2+) is required as a cofactor. Activated by phosphorylation.

The catalysed reaction is alpha-D-glucosamine 1-phosphate = D-glucosamine 6-phosphate. Its function is as follows. Catalyzes the conversion of glucosamine-6-phosphate to glucosamine-1-phosphate. The sequence is that of Phosphoglucosamine mutase from Clostridium tetani (strain Massachusetts / E88).